The sequence spans 140 residues: uncharacterized protein (140 aa).

This sequence belongs to the MG439/MG440 family.

This is an uncharacterized protein from Mycoplasma pneumoniae (strain ATCC 29342 / M129 / Subtype 1) (Mycoplasmoides pneumoniae).